The sequence spans 200 residues: Recombination protein RecR (200 aa).

The segment at 59–74 adopts a C4-type zinc-finger fold; the sequence is CEVCGNVCESSPCTIC. One can recognise a Toprim domain in the interval 82-177; it reads GTICVVEEPK…KVTRLASGLP (96 aa).

The protein belongs to the RecR family.

May play a role in DNA repair. It seems to be involved in an RecBC-independent recombinational process of DNA repair. It may act with RecF and RecO. In Bifidobacterium animalis subsp. lactis (strain AD011), this protein is Recombination protein RecR.